Reading from the N-terminus, the 165-residue chain is 3-hydroxyacyl-[acyl-carrier-protein] dehydratase FERN, mitochondrial (165 aa).

The N-terminal 35 residues, 1-35 (MLMKRLFSSSHVFSSSSASSNLLKIGSVLKQARTF), are a transit peptide targeting the mitochondrion. The MaoC-like domain maps to 36-124 (ADDDVLGYSK…AVSIRQIKNK (89 aa)).

As to quaternary structure, homodimer.

The protein resides in the mitochondrion. The enzyme catalyses a (3R)-hydroxyacyl-[ACP] = a (2E)-enoyl-[ACP] + H2O. It participates in lipid metabolism; fatty acid biosynthesis. 3-hydroxyl-[acyl-carrier-protein] (3-hydroxyl-ACP) dehydratase required for mitochondrial fatty acid synthesis (mtFAS). Essential for photorespiration, tomato morphogenesis and plant development, probably by influencing mitochondrial membrane lipid composition and other lipid metabolic pathways, and by contributing to energy supply and reactive oxygen species (ROS) homeostasis. This is 3-hydroxyacyl-[acyl-carrier-protein] dehydratase FERN, mitochondrial from Solanum lycopersicum (Tomato).